Reading from the N-terminus, the 261-residue chain is Carnitinyl-CoA dehydratase (261 aa).

The Nucleophile role is filled by E111. E131 functions as the Proton acceptor in the catalytic mechanism.

This sequence belongs to the enoyl-CoA hydratase/isomerase family.

The catalysed reaction is (R)-carnitinyl-CoA = crotonobetainyl-CoA + H2O. Its pathway is amine and polyamine metabolism; carnitine metabolism. In terms of biological role, catalyzes the reversible dehydration of L-carnitinyl-CoA to crotonobetainyl-CoA. The polypeptide is Carnitinyl-CoA dehydratase (Shigella flexneri).